The sequence spans 188 residues: GTP-dependent dephospho-CoA kinase (188 aa).

Asp43, Val44, Asp62, Glu121, and Asp144 together coordinate GTP.

This sequence belongs to the GTP-dependent DPCK family.

It catalyses the reaction 3'-dephospho-CoA + GTP = GDP + CoA + H(+). It functions in the pathway cofactor biosynthesis; coenzyme A biosynthesis. Catalyzes the GTP-dependent phosphorylation of the 3'-hydroxyl group of dephosphocoenzyme A to form coenzyme A (CoA). This is GTP-dependent dephospho-CoA kinase from Methanococcoides burtonii (strain DSM 6242 / NBRC 107633 / OCM 468 / ACE-M).